The chain runs to 142 residues: Ribosome-binding factor A (142 aa).

Belongs to the RbfA family. As to quaternary structure, monomer. Binds 30S ribosomal subunits, but not 50S ribosomal subunits or 70S ribosomes.

Its subcellular location is the cytoplasm. In terms of biological role, one of several proteins that assist in the late maturation steps of the functional core of the 30S ribosomal subunit. Associates with free 30S ribosomal subunits (but not with 30S subunits that are part of 70S ribosomes or polysomes). Required for efficient processing of 16S rRNA. May interact with the 5'-terminal helix region of 16S rRNA. The chain is Ribosome-binding factor A from Leifsonia xyli subsp. xyli (strain CTCB07).